The sequence spans 403 residues: GTPase Obg (403 aa).

The Obg domain maps to 1–159; that stretch reads MKFIDESLIR…RDLLLELMLL (159 aa). The region spanning 160–333 is the OBG-type G domain; that stretch reads ADVGMLGFPN…LCRDIMDFII (174 aa). Residues 166–173, 191–195, 213–216, 283–286, and 314–316 contribute to the GTP site; these read GFPNAGKS, FTTLV, DIPG, NKID, and SAA. Serine 173 and threonine 193 together coordinate Mg(2+). A disordered region spans residues 363–403; that stretch reads EYQFDDDEDWDDDWTEEDDDEDWDDDWTEEDDEGIEFIYKP. A compositionally biased stretch (acidic residues) spans 365-397; it reads QFDDDEDWDDDWTEEDDDEDWDDDWTEEDDEGI.

It belongs to the TRAFAC class OBG-HflX-like GTPase superfamily. OBG GTPase family. As to quaternary structure, monomer. Requires Mg(2+) as cofactor.

The protein localises to the cytoplasm. Its function is as follows. An essential GTPase which binds GTP, GDP and possibly (p)ppGpp with moderate affinity, with high nucleotide exchange rates and a fairly low GTP hydrolysis rate. Plays a role in control of the cell cycle, stress response, ribosome biogenesis and in those bacteria that undergo differentiation, in morphogenesis control. This chain is GTPase Obg, found in Haemophilus influenzae (strain PittEE).